A 117-amino-acid polypeptide reads, in one-letter code: MNKKDARIKRAVKTRKKLYKLDAIRLVIHRTCRHIYAQIIAKDNSNVLVAASTTEKLISSQLTTTSNKKAAAIVGKIIAERAIKKGIINVSFDRSGFKYHGRVKMLADRARQTGLSF.

Belongs to the universal ribosomal protein uL18 family. As to quaternary structure, part of the 50S ribosomal subunit; part of the 5S rRNA/L5/L18/L25 subcomplex. Contacts the 5S and 23S rRNAs.

In terms of biological role, this is one of the proteins that bind and probably mediate the attachment of the 5S RNA into the large ribosomal subunit, where it forms part of the central protuberance. The sequence is that of Large ribosomal subunit protein uL18 from Blochmanniella pennsylvanica (strain BPEN).